The chain runs to 210 residues: Ribonuclease HII (210 aa).

An RNase H type-2 domain is found at 18–210 (GLIAGVDEVG…FKPVKALLGL (193 aa)). 3 residues coordinate a divalent metal cation: Asp-24, Glu-25, and Asp-116.

Belongs to the RNase HII family. It depends on Mn(2+) as a cofactor. Requires Mg(2+) as cofactor.

The protein resides in the cytoplasm. The catalysed reaction is Endonucleolytic cleavage to 5'-phosphomonoester.. In terms of biological role, endonuclease that specifically degrades the RNA of RNA-DNA hybrids. This is Ribonuclease HII from Shewanella baltica (strain OS155 / ATCC BAA-1091).